We begin with the raw amino-acid sequence, 607 residues long: DNA mismatch repair protein MutL (607 aa).

The protein belongs to the DNA mismatch repair MutL/HexB family.

Functionally, this protein is involved in the repair of mismatches in DNA. It is required for dam-dependent methyl-directed DNA mismatch repair. May act as a 'molecular matchmaker', a protein that promotes the formation of a stable complex between two or more DNA-binding proteins in an ATP-dependent manner without itself being part of a final effector complex. This is DNA mismatch repair protein MutL from Anaeromyxobacter dehalogenans (strain 2CP-1 / ATCC BAA-258).